The primary structure comprises 322 residues: MKRSIIAGVGAYLPSTVVSNDELAKRVDTSDAWIRERTGIEQRYLATADESCAFMAARAAERALAHAGMTADDVDAILVATSTPDQVFPAVAVRVQALLGAKRGFGFDLSAACSGFVYGLSMGDALIRSGQAKGVLVIGAEVFSRLLDWDDRRTNVLFGDGAGAAFLRASTDNDDPARGILSTHLHSEGEFGDILFIDGANGVAGHPGTIVMNGREVFRHAVGKMAQAVEEAMAANDLTPADIDWLVPHQANLRIIEAMGKKLDLPPEKVVVTVNRHANTSAASIPLALNEAVQDGRIQPGSVVLMEALGGGLTWGSAILRM.

Residues C113 and H249 contribute to the active site. Residues 250-254 (QANLR) form an ACP-binding region. The active site involves N279.

The protein belongs to the thiolase-like superfamily. FabH family. In terms of assembly, homodimer.

The protein localises to the cytoplasm. The enzyme catalyses malonyl-[ACP] + acetyl-CoA + H(+) = 3-oxobutanoyl-[ACP] + CO2 + CoA. It participates in lipid metabolism; fatty acid biosynthesis. In terms of biological role, catalyzes the condensation reaction of fatty acid synthesis by the addition to an acyl acceptor of two carbons from malonyl-ACP. Catalyzes the first condensation reaction which initiates fatty acid synthesis and may therefore play a role in governing the total rate of fatty acid production. Possesses both acetoacetyl-ACP synthase and acetyl transacylase activities. Its substrate specificity determines the biosynthesis of branched-chain and/or straight-chain of fatty acids. The sequence is that of Beta-ketoacyl-[acyl-carrier-protein] synthase III from Granulibacter bethesdensis (strain ATCC BAA-1260 / CGDNIH1).